An 83-amino-acid polypeptide reads, in one-letter code: Small ribosomal subunit protein bS16 (83 aa).

It belongs to the bacterial ribosomal protein bS16 family.

The sequence is that of Small ribosomal subunit protein bS16 from Ectopseudomonas mendocina (strain ymp) (Pseudomonas mendocina).